A 1404-amino-acid chain; its full sequence is DNA-directed RNA polymerase subunit beta' (1404 aa).

Zn(2+)-binding residues include cysteine 70, cysteine 72, cysteine 85, and cysteine 88. Residues aspartate 460, aspartate 462, and aspartate 464 each contribute to the Mg(2+) site. Cysteine 825, cysteine 899, cysteine 906, and cysteine 909 together coordinate Zn(2+).

This sequence belongs to the RNA polymerase beta' chain family. In terms of assembly, the RNAP catalytic core consists of 2 alpha, 1 beta, 1 beta' and 1 omega subunit. When a sigma factor is associated with the core the holoenzyme is formed, which can initiate transcription. Mg(2+) is required as a cofactor. It depends on Zn(2+) as a cofactor.

It catalyses the reaction RNA(n) + a ribonucleoside 5'-triphosphate = RNA(n+1) + diphosphate. In terms of biological role, DNA-dependent RNA polymerase catalyzes the transcription of DNA into RNA using the four ribonucleoside triphosphates as substrates. The chain is DNA-directed RNA polymerase subunit beta' from Nitrosomonas eutropha (strain DSM 101675 / C91 / Nm57).